Here is a 416-residue protein sequence, read N- to C-terminus: Calreticulin (416 aa).

Residues 1–17 form the signal peptide; it reads MLLSVPLLLGLLGLAAA. An N-domain region spans residues 18-197; it reads DPAIYFKEQF…NSQVESGSLE (180 aa). Ca(2+) is bound at residue Gln-26. Lys-48 is subject to N6-acetyllysine. 2 residues coordinate Ca(2+): Lys-62 and Lys-64. N6-(2-hydroxyisobutyryl)lysine is present on Lys-64. A disulfide bridge links Cys-105 with Cys-137. An alpha-D-glucoside-binding residues include Tyr-109, Lys-111, Tyr-128, and Asp-135. Position 159 is an N6-acetyllysine (Lys-159). A 1-1 repeat occupies 191–202; the sequence is VESGSLEDDWDF. Positions 191-255 are 4 X approximate repeats; sequence VESGSLEDDW…DAKKPEDWDE (65 aa). The segment at 193–277 is disordered; sequence SGSLEDDWDF…NPEYKGEWKP (85 aa). The segment at 198-308 is P-domain; it reads DDWDFLPPKK…YSPDANIYAY (111 aa). Basic and acidic residues predominate over residues 207–251; that stretch reads KIKDPDAAKPEDWDERAKIDDPTDSKPEDWDKPEHIPDPDAKKPE. Lys-209 bears the N6-acetyllysine mark. 6 consecutive repeat copies span residues 210–221, 227–238, 244–255, 259–269, 273–283, and 287–297. The segment at 237–270 is interaction with PPIB; the sequence is DKPEHIPDPDAKKPEDWDEEMDGEWEPPVIQNPE. Acidic residues predominate over residues 252 to 261; it reads DWDEEMDGEW. The segment at 259 to 297 is 3 X approximate repeats; it reads GEWEPPVIQNPEYKGEWKPRQIDNPDYKGTWIHPEIDNP. The tract at residues 309 to 416 is C-domain; it reads DSFAVLGLDL…DATGQAKDEL (108 aa). An alpha-D-glucoside is bound at residue Asp-317. Asp-328 contacts Ca(2+). Residues 350-416 are disordered; that stretch reads TKAAEKQMKD…DATGQAKDEL (67 aa). Basic and acidic residues predominate over residues 352-379; that stretch reads AAEKQMKDKQDEEQRLKEEEEDKKRKEE. Over residues 380–408 the composition is skewed to acidic residues; it reads EEAEDKEDEDDRDEDEDEEDEKEEDEEDA. A Prevents secretion from ER motif is present at residues 413-416; that stretch reads KDEL.

It belongs to the calreticulin family. Monomer. Component of an EIF2 complex at least composed of CELF1/CUGBP1, CALR, CALR3, EIF2S1, EIF2S2, HSP90B1 and HSPA5. Interacts with GABARAP, NR3C1 and TRIM21. Interacts with PPIB and SPACA9. Interacts (via P-domain) with PDIA5. Interacts with PDIA3/ERp57. Interacts with CLCC1. As to expression, predentin and odontoblast.

Its subcellular location is the endoplasmic reticulum lumen. The protein localises to the cytoplasm. The protein resides in the cytosol. It localises to the secreted. It is found in the extracellular space. Its subcellular location is the extracellular matrix. The protein localises to the cell surface. The protein resides in the sarcoplasmic reticulum lumen. It localises to the cytoplasmic vesicle. It is found in the secretory vesicle. Its subcellular location is the cortical granule. The protein localises to the cytolytic granule. Functionally, calcium-binding chaperone that promotes folding, oligomeric assembly and quality control in the endoplasmic reticulum (ER) via the calreticulin/calnexin cycle. This lectin interacts transiently with almost all of the monoglucosylated glycoproteins that are synthesized in the ER. Interacts with the DNA-binding domain of NR3C1 and mediates its nuclear export. Involved in maternal gene expression regulation. May participate in oocyte maturation via the regulation of calcium homeostasis. Present in the cortical granules of non-activated oocytes, is exocytosed during the cortical reaction in response to oocyte activation and might participate in the block to polyspermy. The sequence is that of Calreticulin (Calr) from Rattus norvegicus (Rat).